The sequence spans 481 residues: ADAMTS-like protein 5 (481 aa).

An N-terminal signal peptide occupies residues M1–A42. The 53-residue stretch at P45–P97 folds into the TSP type-1 domain. Disulfide bonds link C57-C91, C61-C96, and C72-C81. N218 carries N-linked (GlcNAc...) asparagine glycosylation. Residues Q331–P361 form a disordered region. Residues P345–L355 show a composition bias toward low complexity. 3 cysteine pairs are disulfide-bonded: C360–C425, C363–C427, and C377–C479. Positions C360–C479 constitute an NTR domain.

Interacts with heparin, FBN1 and FBN2. In terms of processing, proteolytically cleaved to release a C-terminal fragment containing the NTR domain. Post-translationally, contains at least one additional N-linked glycosylation site.

The protein localises to the secreted. It is found in the extracellular space. Its subcellular location is the extracellular matrix. In terms of biological role, may play a role in modulation of fibrillin microfibrils in the extracellular matrix (ECM). The chain is ADAMTS-like protein 5 (ADAMTSL5) from Homo sapiens (Human).